A 147-amino-acid polypeptide reads, in one-letter code: Myoglobin (147 aa).

The Globin domain occupies A2–K141. H60 is a nitrite binding site. An O2-binding site is contributed by H60. H89 provides a ligand contact to heme b.

Belongs to the globin family. Monomeric.

It localises to the cytoplasm. The protein localises to the sarcoplasm. It catalyses the reaction Fe(III)-heme b-[protein] + nitric oxide + H2O = Fe(II)-heme b-[protein] + nitrite + 2 H(+). It carries out the reaction H2O2 + AH2 = A + 2 H2O. Its function is as follows. Monomeric heme protein which primary function is to store oxygen and facilitate its diffusion within muscle tissues. Reversibly binds oxygen through a pentacoordinated heme iron and enables its timely and efficient release as needed during periods of heightened demand. Depending on the oxidative conditions of tissues and cells, and in addition to its ability to bind oxygen, it also has a nitrite reductase activity whereby it regulates the production of bioactive nitric oxide. Under stress conditions, like hypoxia and anoxia, it also protects cells against reactive oxygen species thanks to its pseudoperoxidase activity. The protein is Myoglobin (mb) of Scomber japonicus (Chub mackerel).